A 354-amino-acid polypeptide reads, in one-letter code: MSTQMRKIIHIDMDCFYAAVEMRDNPNFRSRPLAVGGHEKQRGVISTCNYEARKFGVRSAMPTAQALKLCPSLLVVPGRMQVYKEVSTHIRSIFSRYTHLIEPLSLDEAYLDVTDSTQCHGSATLIAEAIRRDIWNELQLTASAGVAPIKFLAKVASDMNKPNGQFVIPPEQVQSVIDTLPLQKIPGVGKVSLEKLNQAGLYVCQDVKNSDYRQLLKQFGRLGASLWQRSHGIDEREVIVERERKSVGVERTFTQNIVTYEQCWQVIEEKLFPELAIRLEKANPEKAIIKQGIKMKFADFQLTTIEHVHHELELAYFRELLQDILQRQKGREIRLLGLSVMLKPEEQARQLSLL.

The region spanning 8–189 (IIHIDMDCFY…LPLQKIPGVG (182 aa)) is the UmuC domain. Mg(2+) contacts are provided by aspartate 12 and aspartate 107. Residue glutamate 108 is part of the active site.

This sequence belongs to the DNA polymerase type-Y family. Monomer. The cofactor is Mg(2+).

Its subcellular location is the cytoplasm. The enzyme catalyses DNA(n) + a 2'-deoxyribonucleoside 5'-triphosphate = DNA(n+1) + diphosphate. Its function is as follows. Poorly processive, error-prone DNA polymerase involved in untargeted mutagenesis. Copies undamaged DNA at stalled replication forks, which arise in vivo from mismatched or misaligned primer ends. These misaligned primers can be extended by PolIV. Exhibits no 3'-5' exonuclease (proofreading) activity. May be involved in translesional synthesis, in conjunction with the beta clamp from PolIII. This is DNA polymerase IV from Vibrio vulnificus (strain CMCP6).